Consider the following 500-residue polypeptide: Glycerol kinase (500 aa).

Residue Thr-12 participates in ADP binding. Residues Thr-12, Thr-13, and Ser-14 each coordinate ATP. Residue Thr-12 participates in sn-glycerol 3-phosphate binding. ADP is bound at residue Arg-16. Residues Arg-82, Glu-83, Tyr-135, and Asp-245 each coordinate sn-glycerol 3-phosphate. Glycerol contacts are provided by Arg-82, Glu-83, Tyr-135, Asp-245, and Gln-246. ADP-binding residues include Thr-267 and Gly-310. Thr-267, Gly-310, Gln-314, and Gly-411 together coordinate ATP. Positions 411 and 415 each coordinate ADP.

This sequence belongs to the FGGY kinase family. In terms of assembly, homotetramer and homodimer (in equilibrium).

The catalysed reaction is glycerol + ATP = sn-glycerol 3-phosphate + ADP + H(+). The protein operates within polyol metabolism; glycerol degradation via glycerol kinase pathway; sn-glycerol 3-phosphate from glycerol: step 1/1. Activated by phosphorylation and inhibited by fructose 1,6-bisphosphate (FBP). In terms of biological role, key enzyme in the regulation of glycerol uptake and metabolism. Catalyzes the phosphorylation of glycerol to yield sn-glycerol 3-phosphate. The chain is Glycerol kinase from Clostridium perfringens (strain SM101 / Type A).